A 1793-amino-acid chain; its full sequence is MSFGFGSGGFGQNNNSSTFGGFGSTPTTNTGFGSTGTTAFGSTSNTTGGGLFGGGGGGFGSGNTFGSGFGSKPAFGTPATTSSTSLFGSTTTTAGGTGFGSGGFGSTNTSSPFGGGGTSLFGNKTTTGFGSGTSTFGSNTGGGLFGGGSTTTGFGATNNPGIGTNVGDPPGTAVVPFSPTVEKEVNNPSQSNSYQNILFMDAYKKWSAEELRLADYNQGRKTAAPGGTGAFGSSGFGGFGTTSNTGGFGSNTGGGLFGNTQQNTGGFGTTNTTGSAFGSGGGLFGNKPATGGLFGTSSSQPAQSGGLFGSGTASTFGSSNTGTTSTFGSNNNTGGGLFGSNNTSSKPAFSFGTSNTSTPGFGTATTGSGFGTGTTTNTGGGLFGNTAQNTNTGGGLFGNQQQSGSAFGSGTGFGQQNQSTGTSLFGNTQQKPGGLFGSTTTNTSGGLFGSTNTGTSTFGQTPATQNTGGGLFGSKPAGTGGLFGSTATNQPASTGGLFGNLNTNAQTQQPATGGLFGNLGQNNQAKPSLFGTSTTTGGGLFGNTNAQQQTGSLFGTSTAQQQPQTGLGASLFGSSQQQQQQPQTFSTSITDISAYGATTLFSGLPDDKIQNPGPLATPLSGKAKVKSRSILPMYKLSPANASRLVTTPQKRAYGFSFSAYGSPTSPSSSASSTPGAFGQSILSSSINRGLNKSISASNLRRSLNVEDSILQPGAFSANSSMRLLGGPGSHKKLVINKDMRTDLFSPPNKDKQPQEDGTAARKTVTKRVSFDTSNVETPEKTIESSIPATDDSGYLKPDARSTANGTNGANGAKSSPVAAASPPEMEQVKGKELAVVHEEESPAPAQTDKPRGSQIEPGAYWMSPTADDIRAMNRMQRQRVVGFTVGRENVGSVQFKVPVDLSNINLDDLFGTIVILEPRSATVYPNAAKKPPMGKGLNVPALISLEHSWPRGGPTIKGRRLERHIERLKSIPDTTFESYDPETGVWAFSVEHFTTYGLGDDDDYDDDDYETEPESAVKSTPRPVTSPSISKSSTSPIDPDDTFEFRRSRRALPGAFDDAALSDTDEVANHAQRQGTLSPEPQDADTPLPSREWPEDESMADGLDEYQLEAYEEASQQGSVDEQEDFLPSRFAADNDAPQVPAGIMRARMRAVKKLNAPTKIEVAGGDDWTQILQASVKAPRTMDRATLRALNESGAVWEMKDRGSPPPQATATVSDGMGFATSIDLMKSLFEQAKAPTQPALTTSGKGFVKWPYEQRSKTDTEENLAVPRTNWGPNELLISTQHNEPNLLPVDAADDSATSPSTLARLQQYINLVSSKKQLQRVAGPEFRELAQGDSVWELAALLFDDNGEGVSQFWQQLVSEATDRALSFTAGLEEKAIICLAGNRVDEACRHLLAAGNFRLATLVSTIGKVDNKDIRAQLKDWRESNVLAEFSEPIRAIYELLAGNASVCAGVKNVPIENRVNSFTISQRFGLDWMRSFGLRLWYTSGVIPDVAAAVRSFQEDIEQDREPEPDSALWTLLKAFASREYDWSDTRLGWLLTKAIYTTGKVSFGEDALQKLDKASVTFASALTAASHWVPATFVLLQLSDPASREAAVRDHLGRHAHRIGSPRNLMSPFFTLQKFGVPEAWIWEAKALDYRSRQDSQQEFLALIWAQNYAEANRTFVTRVGPDLVIERNLPRLFAFAQLLFKVKKHLPNWERSAAVYLLYPMAVMQNQGSGKLDRFDNQLIDGLVALHSQTHGDIRQEAAIADMAEELIKCKGAAAASDPRLLQLLPQDVRGKYLRAQVLEAF.

GLFG repeat units follow at residues 50–53 (GLFG), 143–146 (GLFG), 255–258 (GLFG), 282–285 (GLFG), 292–295 (GLFG), 306–309 (GLFG), 336–339 (GLFG), 381–384 (GLFG), and 395–398 (GLFG). 4 disordered regions span residues 404 to 583 (GSAF…QQPQ), 740 to 859 (RTDL…EPGA), 999 to 1043 (GDDD…DDTF), and 1066 to 1097 (EVAN…PEDE). Positions 417–431 (NQSTGTSLFGNTQQK) are enriched in polar residues. GLFG repeat units follow at residues 434-437 (GLFG), 446-449 (GLFG), 470-473 (GLFG), 481-484 (GLFG), and 496-499 (GLFG). The segment covering 437 to 459 (GSTTTNTSGGLFGSTNTGTSTFG) has biased composition (low complexity). Over residues 467 to 483 (TGGGLFGSKPAGTGGLF) the composition is skewed to gly residues. Polar residues predominate over residues 500 to 511 (NLNTNAQTQQPA). Residues 514–517 (GLFG) form a GLFG 15 repeat. Over residues 518–535 (NLGQNNQAKPSLFGTSTT) the composition is skewed to low complexity. The stretch at 539-542 (GLFG) is one GLFG 16 repeat. Polar residues-rich tracts occupy residues 546 to 575 (AQQQ…FGSS) and 801 to 813 (STAN…NGAK). Low complexity predominate over residues 814–823 (SSPVAAASPP). Positions 826–840 (EQVKGKELAVVHEEE) are enriched in basic and acidic residues. In terms of domain architecture, Peptidase S59 spans 857–993 (PGAYWMSPTA…GVWAFSVEHF (137 aa)). Residues 859 to 992 (AYWMSPTADD…TGVWAFSVEH (134 aa)) are nucleoporin RNA-binding motif (NRM). The segment covering 999 to 1013 (GDDDDYDDDDYETEP) has biased composition (acidic residues). Residues 1025–1037 (TSPSISKSSTSPI) are compositionally biased toward low complexity.

Belongs to the nucleoporin GLFG family. As to quaternary structure, component of the nuclear pore complex (NPC). NPC constitutes the exclusive means of nucleocytoplasmic transport. NPCs allow the passive diffusion of ions and small molecules and the active, nuclear transport receptor-mediated bidirectional transport of macromolecules such as proteins, RNAs, ribonucleoparticles (RNPs), and ribosomal subunits across the nuclear envelope. Due to its 8-fold rotational symmetry, all subunits are present with 8 copies or multiples thereof. Post-translationally, NUP145 is autocatalytically cleaved in NUP145N and NUP145C.

It is found in the nucleus. The protein resides in the nuclear pore complex. It localises to the nucleus membrane. Functions as a component of the nuclear pore complex (NPC). NPC components, collectively referred to as nucleoporins (NUPs), can play the role of both NPC structural components and of docking or interaction partners for transiently associated nuclear transport factors. Active directional transport is assured by both, a Phe-Gly (FG) repeat affinity gradient for these transport factors across the NPC and a transport cofactor concentration gradient across the nuclear envelope. NUP145 is autocatalytically cleaved in vivo in 2 polypeptides which assume different functions in the NPC. NUP145N as one of the FG repeat nucleoporins participates in karyopherin interactions and contains part of the autocatalytic cleavage activity. NUP145C as part of the NUP84 complex is involved in nuclear poly(A)+ RNA and tRNA export. This chain is Nucleoporin NUP145 (NUP145), found in Chaetomium thermophilum (strain DSM 1495 / CBS 144.50 / IMI 039719) (Thermochaetoides thermophila).